The chain runs to 580 residues: Glutathione hydrolase proenzyme (580 aa).

Positions 1-25 are cleaved as a signal peptide; that stretch reads MIKPTFLRRVAIAALLSGSCFSAAA. R114 provides a ligand contact to L-glutamate. T391 acts as the Nucleophile in catalysis. L-glutamate contacts are provided by residues T409, N411, Q430, D433, 462 to 463, and 483 to 484; these read SS and GG. The disordered stretch occupies residues 561–580; that stretch reads DGELYGASDPRSVDDLTAGY.

Belongs to the gamma-glutamyltransferase family. In terms of assembly, this enzyme consists of two polypeptide chains, which are synthesized in precursor form from a single polypeptide. Cleaved by autocatalysis into a large and a small subunit.

Its subcellular location is the periplasm. It carries out the reaction an N-terminal (5-L-glutamyl)-[peptide] + an alpha-amino acid = 5-L-glutamyl amino acid + an N-terminal L-alpha-aminoacyl-[peptide]. The catalysed reaction is glutathione + H2O = L-cysteinylglycine + L-glutamate. The enzyme catalyses an S-substituted glutathione + H2O = an S-substituted L-cysteinylglycine + L-glutamate. Its pathway is sulfur metabolism; glutathione metabolism. With respect to regulation, transferase and hydrolase activities are inhibited by L-Ala and L-Gln, and also by GGT affinity labeling reagents such as azaserine and 6-diazo-5-oxo-nor-leucine. Functionally, cleaves the gamma-glutamyl bond of periplasmic glutathione (gamma-Glu-Cys-Gly), glutathione conjugates, and other gamma-glutamyl compounds. The metabolism of glutathione releases free glutamate and the dipeptide cysteinyl-glycine, which is hydrolyzed to cysteine and glycine by dipeptidases; it may function in amino acid uptake/salvage, or possibly in peptidoglycan linkage. Catalyzes the hydrolysis and transpeptidation of many gamma-glutamyl compounds (including some D-gamma-glutamyl substrates), with a preference for basic and aromatic amino acids as acceptors. The KM values for gamma-glutamyl acceptors are so high that it has been proposed transpeptidation is not the physiological role in E.coli. The chain is Glutathione hydrolase proenzyme (ggt) from Escherichia coli (strain K12).